The chain runs to 164 residues: Cytochrome c-type biogenesis protein CcmE (164 aa).

Residues 1–8 (MNPRRKSR) lie on the Cytoplasmic side of the membrane. A helical; Signal-anchor for type II membrane protein transmembrane segment spans residues 9 to 29 (LYLAIVVLIGVALTATLMLYA). Topologically, residues 30–164 (LRSNIDLFYT…ATPQNEGAKS (135 aa)) are periplasmic. Residues His-130 and Tyr-134 each contribute to the heme site. Residues 131–148 (DEKYTPPEVADAMKENHK) are compositionally biased toward basic and acidic residues. Residues 131 to 164 (DEKYTPPEVADAMKENHKGPASAYATPQNEGAKS) are disordered. Positions 155–164 (ATPQNEGAKS) are enriched in polar residues.

It belongs to the CcmE/CycJ family.

It is found in the cell inner membrane. Its function is as follows. Heme chaperone required for the biogenesis of c-type cytochromes. Transiently binds heme delivered by CcmC and transfers the heme to apo-cytochromes in a process facilitated by CcmF and CcmH. The polypeptide is Cytochrome c-type biogenesis protein CcmE (Serratia proteamaculans (strain 568)).